The primary structure comprises 322 residues: Sideroflexin-1 (322 aa).

Residue Ser2 is modified to N-acetylserine. Topologically, residues 2–102 are mitochondrial matrix; that stretch reads SGEVPPNINI…MSAQVPMNMT (101 aa). A helical membrane pass occupies residues 103 to 120; sequence ITGCMMTFYRTTPAVLFW. Over 121–146 the chain is Mitochondrial intermembrane; sequence QWINQSFNAVVNYTNRSGDAPLTVNE. A helical membrane pass occupies residues 147-167; that stretch reads LGTAYVSATTGAVATALGLNA. Over 168–174 the chain is Mitochondrial matrix; the sequence is LTKHVSP. A helical transmembrane segment spans residues 175 to 195; that stretch reads LIGRFVPFAAVAAANCINIPL. Residues 196-228 lie on the Mitochondrial intermembrane side of the membrane; it reads MRQRELKVGIPVTDENGTRLGESTNAAKQAITQ. A helical membrane pass occupies residues 229–249; that stretch reads VVISRILMAAPGMAIPPFIMN. Over 250-266 the chain is Mitochondrial matrix; that stretch reads TLEKKAFLKRFPWMSAP. Residues 267 to 287 form a helical membrane-spanning segment; it reads IQVTLVGFCLVFATPLCCALF. At 288 to 322 the chain is on the mitochondrial intermembrane side; sequence PQKSSMSVTSLEDDLQASIQKSHPELRRVYFNKGL.

Belongs to the sideroflexin family.

The protein localises to the mitochondrion inner membrane. It carries out the reaction L-serine(in) = L-serine(out). It catalyses the reaction L-alanine(in) = L-alanine(out). The enzyme catalyses L-cysteine(in) = L-cysteine(out). Its function is as follows. Amino acid transporter importing serine, an essential substrate of the mitochondrial branch of the one-carbon pathway, into mitochondria. Mitochondrial serine is then converted to glycine and formate, which exits to the cytosol where it is used to generate the charged folates that serve as one-carbon donors. May also transport other amino acids including alanine and cysteine. The protein is Sideroflexin-1 (Sfxn1) of Rattus norvegicus (Rat).